Reading from the N-terminus, the 101-residue chain is uncharacterized protein (101 aa).

This is an uncharacterized protein from Schizosaccharomyces pombe (strain 972 / ATCC 24843) (Fission yeast).